A 313-amino-acid polypeptide reads, in one-letter code: D-apiose import binding protein (313 aa).

The N-terminal stretch at 1 to 26 is a signal peptide; the sequence is MKLTRRLTLAAFASALALGTAMPAFA. Residues N39, 115–116, 162–164, R168, N218, D243, and Q263 contribute to the D-apiofuranose site; these read DR and DTN.

This sequence belongs to the bacterial solute-binding protein 2 family.

It localises to the periplasm. In terms of biological role, part of an ABC transporter complex involved in D-apiose import. Binds D-apiose, D-ribose and D-ribulose. The chain is D-apiose import binding protein from Rhizobium etli (strain ATCC 51251 / DSM 11541 / JCM 21823 / NBRC 15573 / CFN 42).